We begin with the raw amino-acid sequence, 418 residues long: D-inositol 3-phosphate glycosyltransferase 1 (418 aa).

Residues 24–25 (QP) and Gly-32 contribute to the UDP-N-acetyl-alpha-D-glucosamine site. 1D-myo-inositol 3-phosphate-binding positions include 29–34 (DAGGLN), Lys-87, His-115, Ser-139, and Gln-159. Arg-233 and Lys-238 together coordinate UDP-N-acetyl-alpha-D-glucosamine. 3 residues coordinate Mg(2+): Tyr-308, Arg-309, and Ala-311. Glu-321 and Glu-329 together coordinate UDP-N-acetyl-alpha-D-glucosamine. Thr-335 contacts Mg(2+).

It belongs to the glycosyltransferase group 1 family. MshA subfamily. In terms of assembly, homodimer.

It carries out the reaction 1D-myo-inositol 3-phosphate + UDP-N-acetyl-alpha-D-glucosamine = 1D-myo-inositol 2-acetamido-2-deoxy-alpha-D-glucopyranoside 3-phosphate + UDP + H(+). Functionally, catalyzes the transfer of a N-acetyl-glucosamine moiety to 1D-myo-inositol 3-phosphate to produce 1D-myo-inositol 2-acetamido-2-deoxy-glucopyranoside 3-phosphate in the mycothiol biosynthesis pathway. This is D-inositol 3-phosphate glycosyltransferase 1 from Catenulispora acidiphila (strain DSM 44928 / JCM 14897 / NBRC 102108 / NRRL B-24433 / ID139908).